We begin with the raw amino-acid sequence, 321 residues long: Lipoyl synthase (321 aa).

Residues Cys68, Cys73, Cys79, Cys94, Cys98, Cys101, and Ser308 each coordinate [4Fe-4S] cluster. The region spanning 80–297 (FNHGTATFMI…KVLADELGFT (218 aa)) is the Radical SAM core domain.

The protein belongs to the radical SAM superfamily. Lipoyl synthase family. The cofactor is [4Fe-4S] cluster.

Its subcellular location is the cytoplasm. The enzyme catalyses [[Fe-S] cluster scaffold protein carrying a second [4Fe-4S](2+) cluster] + N(6)-octanoyl-L-lysyl-[protein] + 2 oxidized [2Fe-2S]-[ferredoxin] + 2 S-adenosyl-L-methionine + 4 H(+) = [[Fe-S] cluster scaffold protein] + N(6)-[(R)-dihydrolipoyl]-L-lysyl-[protein] + 4 Fe(3+) + 2 hydrogen sulfide + 2 5'-deoxyadenosine + 2 L-methionine + 2 reduced [2Fe-2S]-[ferredoxin]. It functions in the pathway protein modification; protein lipoylation via endogenous pathway; protein N(6)-(lipoyl)lysine from octanoyl-[acyl-carrier-protein]: step 2/2. In terms of biological role, catalyzes the radical-mediated insertion of two sulfur atoms into the C-6 and C-8 positions of the octanoyl moiety bound to the lipoyl domains of lipoate-dependent enzymes, thereby converting the octanoylated domains into lipoylated derivatives. The sequence is that of Lipoyl synthase from Shewanella sp. (strain MR-7).